The sequence spans 802 residues: MTASVKEGAHSEVLDKRRVNTKLGQKITANSLSSDANSSMNSKRLGLGIARRPGDNLLASISDNYGGKYEVSGENMTELPQPRGLFIHRNDRPISDDSIVTKNSELFSSGFSDDNNSGASSVETDELSSEGGINLGLNNLTVGPIASDEHNMDGSFISDNFEESFISTDSVSTLHIPNENRNHDKSFSYENGPQSRAHKMISTNTTSSTINANNMKSTGTLPPFRPRSNSYSSKHLGTSTLYDHSNSTSAILPNKQHYLTPSQRYRMRKERNDTSLRNSIRKKERFYDEQEPNMELQEGDIDDSLIWNIPMASFSTNSFLMSSGDPKHVRSHQSKPQPRFPQRHNFGSVPHFQPPLMSSALDFKAMPTSPVPGIDSTSDLQFIRETTENLSSVYLQSSNRLSRSKLLERTDSAEVLPIEFKEASEKGMEDLILVSEDKLDVVSHSRPSWLPPKDPEEKKLHENQISKSMSIASFEQLDRNKESEERHIQDETNRQKYVLLLDRGVTRNSSIQSLKKMIWETPLTVDTRWSIYDQLLQSDVRLISEQYIESFEQIMQVLNKMEFPRNKETEIEKLIDNSIKNKISGKQNISNDLLLMLQLKSISHQGLIPGDELLFHHFLTDPSTNQSLQHVWELVNLIQLTCFNDFTKEKYDIKIVEPRGVVSKYLSQDDSFKSEFNTSCLNSTTWWNILERVDHNLFMWIMDIIVVANSQCFKNYPINREKFKNKSWEYYKSKKVIVEYKVLASFALNVLLNYHFGFNDLISITTLEDKSFCIPMPLDNLFDEGYINNVFIRKWLHYYKKF.

Disordered stretches follow at residues 207–230 and 323–345; these read SSTI…RSNS and SGDP…QRHN.

The protein belongs to the SBE2 family.

The protein resides in the cytoplasm. It localises to the golgi apparatus. With SBE2, is involved in cell wall integrity and polarity processes like bud growth. The polypeptide is Protein SBE22 (SBE22) (Vanderwaltozyma polyspora (strain ATCC 22028 / DSM 70294 / BCRC 21397 / CBS 2163 / NBRC 10782 / NRRL Y-8283 / UCD 57-17) (Kluyveromyces polysporus)).